The sequence spans 130 residues: Small ribosomal subunit protein uS9 (130 aa).

The protein belongs to the universal ribosomal protein uS9 family.

This Geobacillus sp. (strain WCH70) protein is Small ribosomal subunit protein uS9.